The following is a 226-amino-acid chain: Protein-L-isoaspartate O-methyltransferase (226 aa).

Serine 75 is an active-site residue.

This sequence belongs to the methyltransferase superfamily. L-isoaspartyl/D-aspartyl protein methyltransferase family.

The protein resides in the cytoplasm. It carries out the reaction [protein]-L-isoaspartate + S-adenosyl-L-methionine = [protein]-L-isoaspartate alpha-methyl ester + S-adenosyl-L-homocysteine. In terms of biological role, catalyzes the methyl esterification of L-isoaspartyl residues in peptides and proteins that result from spontaneous decomposition of normal L-aspartyl and L-asparaginyl residues. It plays a role in the repair and/or degradation of damaged proteins. The chain is Protein-L-isoaspartate O-methyltransferase from Lawsonia intracellularis (strain PHE/MN1-00).